The chain runs to 254 residues: HLA class II histocompatibility antigen, DQ alpha 1 chain (254 aa).

The signal sequence occupies residues 1–23 (MILNKALMLGALALTTVMSPCGG). An alpha-1 region spans residues 24–119 (EDIVADHVAS…EVPEVTVFSK (96 aa)). The Extracellular portion of the chain corresponds to 24–216 (EDIVADHVAS…IPAPMSELTE (193 aa)). N-linked (GlcNAc...) asparagine glycosylation is found at Asn103 and Asn143. One can recognise an Ig-like C1-type domain in the interval 112 to 204 (PEVTVFSKSP…LDKPLLKHWE (93 aa)). The interval 120–203 (SPVTLGQPNI…GLDKPLLKHW (84 aa)) is alpha-2. A disulfide bond links Cys132 and Cys188. The segment at 204 to 216 (EPEIPAPMSELTE) is connecting peptide. A helical transmembrane segment spans residues 217–239 (TVVCALGLSVGLVGIVVGTVFII). Residues 240 to 254 (RGLRSVGASRHQGPL) are Cytoplasmic-facing.

This sequence belongs to the MHC class II family. As to quaternary structure, heterodimer of an alpha and a beta subunit; also referred as MHC class II molecule. In the endoplasmic reticulum (ER) it forms a heterononamer; 3 MHC class II molecules bind to a CD74 homotrimer (also known as invariant chain or HLA class II histocompatibility antigen gamma chain). In the endosomal/lysosomal system; CD74 undergoes sequential degradation by various proteases; leaving a small fragment termed CLIP on each MHC class II molecule. MHC class II molecule interacts with HLA_DM, and HLA_DO in B-cells, in order to release CLIP and facilitate the binding of antigenic peptides.

The protein localises to the cell membrane. Its subcellular location is the endoplasmic reticulum membrane. The protein resides in the golgi apparatus. It localises to the trans-Golgi network membrane. It is found in the endosome membrane. The protein localises to the lysosome membrane. Functionally, binds peptides derived from antigens that access the endocytic route of antigen presenting cells (APC) and presents them on the cell surface for recognition by the CD4 T-cells. The peptide binding cleft accommodates peptides of 10-30 residues. The peptides presented by MHC class II molecules are generated mostly by degradation of proteins that access the endocytic route, where they are processed by lysosomal proteases and other hydrolases. Exogenous antigens that have been endocytosed by the APC are thus readily available for presentation via MHC II molecules, and for this reason this antigen presentation pathway is usually referred to as exogenous. As membrane proteins on their way to degradation in lysosomes as part of their normal turn-over are also contained in the endosomal/lysosomal compartments, exogenous antigens must compete with those derived from endogenous components. Autophagy is also a source of endogenous peptides, autophagosomes constitutively fuse with MHC class II loading compartments. In addition to APCs, other cells of the gastrointestinal tract, such as epithelial cells, express MHC class II molecules and CD74 and act as APCs, which is an unusual trait of the GI tract. To produce a MHC class II molecule that presents an antigen, three MHC class II molecules (heterodimers of an alpha and a beta chain) associate with a CD74 trimer in the ER to form a heterononamer. Soon after the entry of this complex into the endosomal/lysosomal system where antigen processing occurs, CD74 undergoes a sequential degradation by various proteases, including CTSS and CTSL, leaving a small fragment termed CLIP (class-II-associated invariant chain peptide). The removal of CLIP is facilitated by HLA-DM via direct binding to the alpha-beta-CLIP complex so that CLIP is released. HLA-DM stabilizes MHC class II molecules until primary high affinity antigenic peptides are bound. The MHC II molecule bound to a peptide is then transported to the cell membrane surface. In B-cells, the interaction between HLA-DM and MHC class II molecules is regulated by HLA-DO. Primary dendritic cells (DCs) also to express HLA-DO. Lysosomal microenvironment has been implicated in the regulation of antigen loading into MHC II molecules, increased acidification produces increased proteolysis and efficient peptide loading. The polypeptide is HLA class II histocompatibility antigen, DQ alpha 1 chain (HLA-DQA1) (Homo sapiens (Human)).